Here is a 362-residue protein sequence, read N- to C-terminus: 2-oxoglutarate-dependent dioxygenase lolO1 (362 aa).

In terms of domain architecture, Fe2OG dioxygenase spans 199–312 (TWNYFLGQPV…RYSLVFFGHL (114 aa)). Fe cation is bound by residues histidine 222, aspartate 224, and histidine 280. Arginine 303 serves as a coordination point for 2-oxoglutarate.

The protein belongs to the iron/ascorbate-dependent oxidoreductase family. The cofactor is Fe(2+).

It participates in alkaloid biosynthesis. Its function is as follows. 2-oxoglutarate-dependent dioxygenase; part of the gene cluster that mediates the biosynthesis of loline alkaloids, potent insecticidal agents composed of a pyrrolizidine ring system and an uncommon ether bridge linking carbons 2 and 7. Lolines are structurally differentiated by the various modifications of the L-amino group and include norloline, loline, N-methylloline, N-acetylloline, N-acetylnorloline, and N-formylloline. The first committed step is the condensation of O-acetyl-L-homoserine (derived from L-aspartic acid) and L-proline, probably catalyzed by the gamma-type pyridoxal 5'-phosphate(PLP)-dependent enzyme lolC, to give the diamino diacid, NACPP. Ensuing cyclization, decarboxylation, and acetylation steps yield 1-exo-acetamidopyrrolizidine (AcAP). LolO is required for installation of the ether bridge upon the pathway intermediate, 1-exo-acetamidopyrrolizidine (AcAP). In sequential 2-oxoglutarate- and O(2)-consuming steps, lolO removes hydrogens from C2 and C7 of AcAP to form both carbon-oxygen bonds in N-acetylnorloline (NANL), the precursor to all other lolines. The enzymes lolD, lolE, lolF and lolT have also been proposed to be involved in the ether-bridge installation. Further processing of the exocyclic moiety of NANL by fungal N-acetamidase (LolN), methyltransferase (LolM), and cytochrome P450 (LolP) enzymes, with occasional involvement of a plant acetyltransferase, generates the other known lolines. LolN transforms NANL to norlonine which is monomethylated and dimethylated to respectively lonine and N-methyllonine (NML) by lolM. LolP catalyzes hydroxylation of the methyl group in N-methylloline (NML) and further oxygenation to N-formylloline (NFL). A plant acetyltransferase is responsible for the acetylation of loline to form N-acetylloline (NAL). LolA might interact with aspartate kinase to prevent feedback inhibition of its activity by these end products and thereby promote production of l-homoserine from l-aspartate. The polypeptide is 2-oxoglutarate-dependent dioxygenase lolO1 (Epichloe uncinata (Endophyte fungus)).